Consider the following 132-residue polypeptide: ATP synthase epsilon chain (132 aa).

It belongs to the ATPase epsilon chain family. As to quaternary structure, F-type ATPases have 2 components, CF(1) - the catalytic core - and CF(0) - the membrane proton channel. CF(1) has five subunits: alpha(3), beta(3), gamma(1), delta(1), epsilon(1). CF(0) has three main subunits: a, b and c.

It is found in the cell membrane. In terms of biological role, produces ATP from ADP in the presence of a proton gradient across the membrane. In Desulfitobacterium hafniense (strain DSM 10664 / DCB-2), this protein is ATP synthase epsilon chain.